The primary structure comprises 86 residues: Translation initiation factor IF-1 2 (86 aa).

Positions M1–K72 constitute an S1-like domain.

Belongs to the IF-1 family. As to quaternary structure, component of the 30S ribosomal translation pre-initiation complex which assembles on the 30S ribosome in the order IF-2 and IF-3, IF-1 and N-formylmethionyl-tRNA(fMet); mRNA recruitment can occur at any time during PIC assembly.

It localises to the cytoplasm. Its function is as follows. One of the essential components for the initiation of protein synthesis. Stabilizes the binding of IF-2 and IF-3 on the 30S subunit to which N-formylmethionyl-tRNA(fMet) subsequently binds. Helps modulate mRNA selection, yielding the 30S pre-initiation complex (PIC). Upon addition of the 50S ribosomal subunit IF-1, IF-2 and IF-3 are released leaving the mature 70S translation initiation complex. This Aromatoleum aromaticum (strain DSM 19018 / LMG 30748 / EbN1) (Azoarcus sp. (strain EbN1)) protein is Translation initiation factor IF-1 2.